The following is a 445-amino-acid chain: Endoplasmic reticulum membrane adapter protein XK (445 aa).

The Cytoplasmic segment spans residues 1-2 (MK). The helical transmembrane segment at 3-23 (FPASVLASVFLFVAETMAALY) threads the bilayer. At 24–37 (LSSTYRSAGDRMWQ) the chain is on the extracellular side. A helical membrane pass occupies residues 38-58 (ALTLFFSLMPCTLVQLTLLFV). Residues 59–68 (HRDLSRDRPL) lie on the Cytoplasmic side of the membrane. Residues 69-89 (VLLMHLLQLGPLYRCCEVFCI) form a helical membrane-spanning segment. Over 90 to 140 (YCQSDQNEEPYVSITKKRQMPKDGLSEEVEKEVGQSEGKLFTHRSAFSRAS) the chain is Extracellular. Residue Ser115 is modified to Phosphoserine. Residues 141–161 (VIQAFLGSAPQLTLQLYITVL) traverse the membrane as a helical segment. The Cytoplasmic segment spans residues 162 to 170 (EQNITTGRF). The chain crosses the membrane as a helical span at residues 171–191 (IMVLSLLSIVYGALRCNILAI). Residues 192–207 (KIKYDEYEVKVKPLAY) are Extracellular-facing. The helical transmembrane segment at 208–228 (VCIFLWRSFEIATRVIVLVLF) threads the bilayer. At 229–234 (TSVLKI) the chain is on the cytoplasmic side. A helical membrane pass occupies residues 235-255 (WVVVVILVNFFSFFLYPWILF). Over 256–276 (WNSGSPFPENIEKALTRVGTT) the chain is Extracellular. A helical transmembrane segment spans residues 277 to 297 (IVLGFLTLLYAGINMFCWSAV). Residues 298–316 (QLKIDNPELISKSQNWYRL) are Cytoplasmic-facing. The helical transmembrane segment at 317 to 337 (LIYYMMRFVENSVLLLLWFFF) threads the bilayer. Residues 338-348 (KTDIYMYVCAP) are Extracellular-facing. A helical transmembrane segment spans residues 349-369 (LLILQLLIGYCTSILFMLVFY). The Cytoplasmic portion of the chain corresponds to 370–445 (QFFHPCKKLF…IWTAVDLCST (76 aa)).

Belongs to the XK family. In terms of assembly, heterodimer with Kell; disulfide-linked. Interacts with VPS13A.

The protein localises to the endoplasmic reticulum membrane. In terms of biological role, recruits the lipid transfer protein VPS13A from lipid droplets to the endoplasmic reticulum (ER) membrane. This chain is Endoplasmic reticulum membrane adapter protein XK, found in Rattus norvegicus (Rat).